The following is a 271-amino-acid chain: Chymotrypsin-like elastase family member 2A (271 aa).

The first 16 residues, 1–16 (MIRTLLLSALVAGALS), serve as a signal peptide directing secretion. Positions 17-30 (CGYPTYEVEDDVSR) are cleaved as a propeptide — activation peptide. The region spanning 31–269 (VVGGQEATPN…YIDWINSVMA (239 aa)) is the Peptidase S1 domain. A disulfide bridge links cysteine 60 with cysteine 76. Catalysis depends on charge relay system residues histidine 75 and aspartate 123. Intrachain disulfides connect cysteine 157–cysteine 224, cysteine 188–cysteine 204, and cysteine 214–cysteine 245. The Charge relay system role is filled by serine 218.

Belongs to the peptidase S1 family. Elastase subfamily. In terms of assembly, interacts with CPA1. Interacts with SERPINA1. In terms of tissue distribution, highly expressed in pancreas (at mRNA and protein levels). Also expressed in adrenal gland and small intestine.

It localises to the secreted. The catalysed reaction is Preferential cleavage: Leu-|-Xaa, Met-|-Xaa and Phe-|-Xaa. Hydrolyzes elastin.. Elastase that enhances insulin signaling and might have a physiologic role in cellular glucose metabolism. Circulates in plasma and reduces platelet hyperactivation, triggers both insulin secretion and degradation, and increases insulin sensitivity. This Mus musculus (Mouse) protein is Chymotrypsin-like elastase family member 2A.